The chain runs to 153 residues: 6,7-dimethyl-8-ribityllumazine synthase (153 aa).

Residues Phe-22, Ala-56–Glu-58, and Ala-80–Ile-82 each bind 5-amino-6-(D-ribitylamino)uracil. Ser-85–Thr-86 contacts (2S)-2-hydroxy-3-oxobutyl phosphate. His-88 functions as the Proton donor in the catalytic mechanism. Phe-113 contributes to the 5-amino-6-(D-ribitylamino)uracil binding site. Arg-127 contributes to the (2S)-2-hydroxy-3-oxobutyl phosphate binding site.

It belongs to the DMRL synthase family.

It catalyses the reaction (2S)-2-hydroxy-3-oxobutyl phosphate + 5-amino-6-(D-ribitylamino)uracil = 6,7-dimethyl-8-(1-D-ribityl)lumazine + phosphate + 2 H2O + H(+). The protein operates within cofactor biosynthesis; riboflavin biosynthesis; riboflavin from 2-hydroxy-3-oxobutyl phosphate and 5-amino-6-(D-ribitylamino)uracil: step 1/2. In terms of biological role, catalyzes the formation of 6,7-dimethyl-8-ribityllumazine by condensation of 5-amino-6-(D-ribitylamino)uracil with 3,4-dihydroxy-2-butanone 4-phosphate. This is the penultimate step in the biosynthesis of riboflavin. This chain is 6,7-dimethyl-8-ribityllumazine synthase, found in Fusobacterium nucleatum subsp. nucleatum (strain ATCC 25586 / DSM 15643 / BCRC 10681 / CIP 101130 / JCM 8532 / KCTC 2640 / LMG 13131 / VPI 4355).